The chain runs to 496 residues: Cytochrome c-552 (496 aa).

Positions 1 to 23 are cleaved as a signal peptide; sequence MKKYKFLFAISIIAIGLMTVLLA. His-100 lines the heme c pocket. Residues Cys-128, Cys-131, and Lys-132 each contribute to the heme site. 6 residues coordinate heme c: Cys-166, Cys-169, His-170, Cys-210, Cys-213, and His-214. Ca(2+) is bound by residues Glu-216, Tyr-217, Lys-269, and Gln-271. Substrate is bound at residue Tyr-217. His-272 is a binding site for substrate. Heme c is bound by residues His-283, Cys-290, Cys-293, His-294, His-308, Cys-321, Cys-324, His-325, and His-400.

The protein belongs to the cytochrome c-552 family. Ca(2+) is required as a cofactor. The cofactor is heme c.

It localises to the periplasm. It carries out the reaction 6 Fe(III)-[cytochrome c] + NH4(+) + 2 H2O = 6 Fe(II)-[cytochrome c] + nitrite + 8 H(+). The protein operates within nitrogen metabolism; nitrate reduction (assimilation). Functionally, catalyzes the reduction of nitrite to ammonia, consuming six electrons in the process. The sequence is that of Cytochrome c-552 from Aliarcobacter butzleri (strain RM4018) (Arcobacter butzleri).